Consider the following 785-residue polypeptide: Adhesion G-protein coupled receptor G7 (785 aa).

The N-terminal stretch at 1–26 (MRSCRSCNVRVLVAIVCGLLTGIVLG) is a signal peptide. Residues 27-435 (LGIWRMVIRI…KYPKSLDILS (409 aa)) are Extracellular-facing. Residues Asn-82, Asn-122, Asn-133, Asn-152, Asn-159, Asn-178, Asn-195, Asn-239, Asn-289, Asn-348, Asn-400, and Asn-408 are each glycosylated (N-linked (GlcNAc...) asparagine). The region spanning 271 to 425 (FSVQKGSSNS…AVLMSFKKDY (155 aa)) is the GAIN-B domain. Cystine bridges form between Cys-380-Cys-407 and Cys-395-Cys-409. Residues 380 to 425 (CVYWNFLINDWDTQGCQKTGNTTEFLRCNCSHTTNFAVLMSFKKDY) are GPS. A helical transmembrane segment spans residues 436–456 (NIGCALSIAGLALTILFQILT). The Cytoplasmic segment spans residues 457-465 (RKIRKTSVT). A helical membrane pass occupies residues 466 to 486 (WVLVSLCSSMLIFNLLFVFGI). At 487–523 (ENSNKNLKTSDSDINVKPENNKIPESDTIETPNPSCT) the chain is on the extracellular side. The chain crosses the membrane as a helical span at residues 524 to 544 (AIAALLHYFLLVTFTWNGLSA). Residues 545–561 (TQLYFLLIRTMKPLPRH) are Cytoplasmic-facing. The helical transmembrane segment at 562 to 582 (FIIFISLVGWGVPAIIVGVTI) threads the bilayer. Residues 583-623 (GSIYALSGNKRYWELDYRQEEICWLAVPKDNDYARSPLLWS) are Extracellular-facing. A helical membrane pass occupies residues 624 to 644 (FIIPVTIILITNITIFVIITV). The Cytoplasmic segment spans residues 645-668 (KVLWKNNQNLTSTKKVSSLKKVFS). Residues 669–689 (TLSIAVVFGVTWILAYAMLIS) form a helical membrane-spanning segment. Over 690–694 (NDDIR) the chain is Extracellular. Residues 695 to 715 (IVFSYIFCLFNTTQGLQIFIL) form a helical membrane-spanning segment. Topologically, residues 716-785 (YTVRTKVFQS…SGMTEETSLS (70 aa)) are cytoplasmic.

The protein belongs to the G-protein coupled receptor 2 family. Adhesion G-protein coupled receptor (ADGR) subfamily. Selectively expressed in the intestinal tissues.

The protein localises to the membrane. Orphan receptor. In Mus musculus (Mouse), this protein is Adhesion G-protein coupled receptor G7 (Adgrg7).